A 465-amino-acid chain; its full sequence is Hexokinase-4 (465 aa).

Positions 10–454 constitute a Hexokinase domain; sequence ATKKEKVEQI…SGRGAALVSA (445 aa). Residues 67–203 are hexokinase small subdomain; that stretch reads EGSEVGDFLS…DFEMDVVAMV (137 aa). 78–83 serves as a coordination point for ATP; sequence DLGGTN. Substrate is bound by residues 151–152, 168–169, and 204–205; these read SF, TK, and ND. A hexokinase large subdomain region spans residues 204 to 443; the sequence is NDTVATMISC…CEITFIESEE (240 aa). Position 228 (T228) interacts with ATP. 3 residues coordinate substrate: N231, E256, and E290. Residues 295–296, 332–336, and 411–415 contribute to the ATP site; these read GK, TRFVS, and SVYKL.

It belongs to the hexokinase family. As to quaternary structure, monomer. Interacts with MIDN; the interaction occurs preferentially at low glucose levels and results in inhibition of hexokinase activity. Interacts with GCKR; leading to sequestration in the nucleus.

It localises to the cytoplasm. The protein localises to the nucleus. It is found in the mitochondrion. It catalyses the reaction a D-hexose + ATP = a D-hexose 6-phosphate + ADP + H(+). It carries out the reaction D-fructose + ATP = D-fructose 6-phosphate + ADP + H(+). The enzyme catalyses D-glucose + ATP = D-glucose 6-phosphate + ADP + H(+). The catalysed reaction is D-mannose + ATP = D-mannose 6-phosphate + ADP + H(+). It functions in the pathway carbohydrate metabolism; hexose metabolism. It participates in carbohydrate degradation; glycolysis; D-glyceraldehyde 3-phosphate and glycerone phosphate from D-glucose: step 1/4. Its activity is regulated as follows. Subject to allosteric regulation. Low glucose and high fructose-6-phosphate triggers association with the inhibitor GCKR followed by sequestration in the nucleus. Its function is as follows. Catalyzes the phosphorylation of hexose, such as D-glucose, D-fructose and D-mannose, to hexose 6-phosphate (D-glucose 6-phosphate, D-fructose 6-phosphate and D-mannose 6-phosphate, respectively). Compared to other hexokinases, has a weak affinity for D-glucose, and is effective only when glucose is abundant. Mainly expressed in pancreatic beta cells and the liver and constitutes a rate-limiting step in glucose metabolism in these tissues. Since insulin secretion parallels glucose metabolism and the low glucose affinity of GCK ensures that it can change its enzymatic activity within the physiological range of glucose concentrations, GCK acts as a glucose sensor in the pancreatic beta cell. In pancreas, plays an important role in modulating insulin secretion. In liver, helps to facilitate the uptake and conversion of glucose by acting as an insulin-sensitive determinant of hepatic glucose usage. Required to provide D-glucose 6-phosphate for the synthesis of glycogen. Mediates the initial step of glycolysis by catalyzing phosphorylation of D-glucose to D-glucose 6-phosphate. In Mus musculus (Mouse), this protein is Hexokinase-4.